The following is a 421-amino-acid chain: Histidine--tRNA ligase (421 aa).

This sequence belongs to the class-II aminoacyl-tRNA synthetase family. As to quaternary structure, homodimer.

It localises to the cytoplasm. It catalyses the reaction tRNA(His) + L-histidine + ATP = L-histidyl-tRNA(His) + AMP + diphosphate + H(+). This chain is Histidine--tRNA ligase, found in Solidesulfovibrio magneticus (strain ATCC 700980 / DSM 13731 / RS-1) (Desulfovibrio magneticus).